Reading from the N-terminus, the 252-residue chain is NAD-dependent protein deacetylase (252 aa).

The Deacetylase sirtuin-type domain occupies 2–243; that stretch reads DSKRDEKILE…DRVVKELKKI (242 aa). NAD(+) contacts are provided by A28, T32, F39, R40, Q109, I111, D112, and H127. F39 provides a ligand contact to nicotinamide. Nicotinamide contacts are provided by I111 and D112. H127 (proton acceptor) is an active-site residue. Residues C135, C138, C148, and C150 each coordinate Zn(2+). Positions 188, 189, and 211 each coordinate NAD(+).

The protein belongs to the sirtuin family. Class U subfamily. Zn(2+) is required as a cofactor.

It is found in the cytoplasm. The catalysed reaction is N(6)-acetyl-L-lysyl-[protein] + NAD(+) + H2O = 2''-O-acetyl-ADP-D-ribose + nicotinamide + L-lysyl-[protein]. In terms of biological role, NAD-dependent protein deacetylase which modulates the activities of several enzymes which are inactive in their acetylated form. The chain is NAD-dependent protein deacetylase from Fusobacterium nucleatum subsp. nucleatum (strain ATCC 25586 / DSM 15643 / BCRC 10681 / CIP 101130 / JCM 8532 / KCTC 2640 / LMG 13131 / VPI 4355).